A 248-amino-acid polypeptide reads, in one-letter code: 2,3-bisphosphoglycerate-dependent phosphoglycerate mutase (248 aa).

Residues 8–15, 21–22, Arg60, 87–90, Lys98, and 114–115 contribute to the substrate site; these read RHGESTWN, TG, ERHY, and RR. The active-site Tele-phosphohistidine intermediate is His9. Glu87 acts as the Proton donor/acceptor in catalysis. The segment at 117–137 is disordered; sequence YDTPPPALEPTDPRASYDDPR. Residues 127-137 show a composition bias toward basic and acidic residues; it reads TDPRASYDDPR. Residue 183-184 coordinates substrate; the sequence is GN.

The protein belongs to the phosphoglycerate mutase family. BPG-dependent PGAM subfamily. Homodimer.

The enzyme catalyses (2R)-2-phosphoglycerate = (2R)-3-phosphoglycerate. It functions in the pathway carbohydrate degradation; glycolysis; pyruvate from D-glyceraldehyde 3-phosphate: step 3/5. Its function is as follows. Catalyzes the interconversion of 2-phosphoglycerate and 3-phosphoglycerate. In Cupriavidus taiwanensis (strain DSM 17343 / BCRC 17206 / CCUG 44338 / CIP 107171 / LMG 19424 / R1) (Ralstonia taiwanensis (strain LMG 19424)), this protein is 2,3-bisphosphoglycerate-dependent phosphoglycerate mutase.